The primary structure comprises 229 residues: Methyltransferase ctvB (229 aa).

It belongs to the methyltransferase superfamily.

The protein operates within mycotoxin biosynthesis. In terms of biological role, methyltransferase; part of the gene cluster that mediates the biosynthesis of citreoviridin, an inhibitor of the of F1-ATPase beta-subunit. The HR-PKS ctvA accepts acetyl-CoA as the starter unit and catalyzes eight iterations of malonyl-CoA extension and four iterations of SAM-dependent methylation at C4, C12, C14, and C16. The KR and DH domains selectively act on the first six iterations to generate the hexaene chain. In the last three iterations, the KR and DH domains terminate their functions to yield a beta,delta-diketo ester moiety, which then undergoes intramolecular cyclization to yield an alpha-pyrone intermediate. Subsequently, ctvB methylates the alpha-pyrone hydroxyl group to generate citreomontanin. In order to form the tetrahydrofuran ring with the correct stereochemistry, the terminal alkenes of citreomontanin need to undergo isomerization to yield a (17Z)-hexaene, a step that could be catalyzed by ctvC. The (17Z)-hexaene then undergoes bisepoxidation by ctvC to form a (17R,16R,15S,14R)-bisepoxide moiety. Lastly, ctvD acts as a regioselective hydrolase to form the tetrahydrofuran ring with the substituents in the correct absolute configuration, completing the biosynthesis of citreoviridin. In Aspergillus terreus (strain NIH 2624 / FGSC A1156), this protein is Methyltransferase ctvB.